Reading from the N-terminus, the 143-residue chain is Histone H2B.2, sperm (143 aa).

The tract at residues 1–52 is disordered; sequence MPRSPSKSSPRKGSPRKGSPRKGSPKRGGKGAKRAGKGGRRRNVVKRRRRRR. 5 short sequence motifs (SPKK motif) span residues 4-7, 9-12, 14-17, 19-22, and 24-27; these read SPSK, SPRK, and SPKR. Over residues 9 to 52 the composition is skewed to basic residues; the sequence is SPRKGSPRKGSPRKGSPKRGGKGAKRAGKGGRRRNVVKRRRRRR. Phosphoserine is present on residues S14, S19, and S24. O-linked (GlcNAc) serine glycosylation is present at S130. A Glycyl lysine isopeptide (Lys-Gly) (interchain with G-Cter in ubiquitin) cross-link involves residue K138.

This sequence belongs to the histone H2B family. In terms of assembly, the nucleosome is a histone octamer containing two molecules each of H2A, H2B, H3 and H4 assembled in one H3-H4 heterotetramer and two H2A-H2B heterodimers. The octamer wraps approximately 147 bp of DNA. Monoubiquitination of Lys-138 gives a specific tag for epigenetic transcriptional activation and is also prerequisite for histone H3 'Lys-4' and 'Lys-79' methylation. In terms of processing, phosphorylated on SPKK motifs 3, 4 and 5; which may regulate DNA binding. Dephosphorylated during maturation of spermatids to mature sperm and rephosphorylated at fertilization. Post-translationally, glcNAcylation at Ser-130 promotes monoubiquitination of Lys-138. It fluctuates in response to extracellular glucose, and associates with transcribed genes. As to expression, testis-specific.

It is found in the nucleus. Its subcellular location is the chromosome. In terms of biological role, core component of nucleosome. Nucleosomes wrap and compact DNA into chromatin, limiting DNA accessibility to the cellular machineries which require DNA as a template. Histones thereby play a central role in transcription regulation, DNA repair, DNA replication and chromosomal stability. DNA accessibility is regulated via a complex set of post-translational modifications of histones, also called histone code, and nucleosome remodeling. This Lytechinus pictus (Painted sea urchin) protein is Histone H2B.2, sperm.